An 80-amino-acid polypeptide reads, in one-letter code: DinI-like protein Z2083/ECs2153 (80 aa).

The polypeptide is DinI-like protein Z2083/ECs2153 (Escherichia coli O157:H7).